Consider the following 156-residue polypeptide: Hemerythrin-like protein (156 aa).

7 residues coordinate Fe cation: His54, His84, Glu88, His109, His113, His142, and Asp147.

The protein belongs to the hemerythrin family.

Oxygen-binding protein. The oxygen-binding site contains two iron atoms. This is Hemerythrin-like protein from Nematostella vectensis (Starlet sea anemone).